The following is a 263-amino-acid chain: Aminoglycoside 3'-phosphotransferase (263 aa).

D189 functions as the Proton acceptor in the catalytic mechanism.

The protein belongs to the aminoglycoside phosphotransferase family.

It carries out the reaction kanamycin A + ATP = kanamycin 3'-phosphate + ADP + H(+). In terms of biological role, resistance to kanamycin and structurally-related aminoglycosides, including amikacin. The sequence is that of Aminoglycoside 3'-phosphotransferase (aphA) from Staphylococcus aureus.